The following is a 287-amino-acid chain: Elongation factor Ts (287 aa).

Positions 80 to 83 (TDFL) are involved in Mg(2+) ion dislocation from EF-Tu.

The protein belongs to the EF-Ts family.

Its subcellular location is the cytoplasm. Associates with the EF-Tu.GDP complex and induces the exchange of GDP to GTP. It remains bound to the aminoacyl-tRNA.EF-Tu.GTP complex up to the GTP hydrolysis stage on the ribosome. In Pseudomonas putida (strain ATCC 700007 / DSM 6899 / JCM 31910 / BCRC 17059 / LMG 24140 / F1), this protein is Elongation factor Ts.